Here is a 949-residue protein sequence, read N- to C-terminus: Protocadherin alpha-11 (949 aa).

The N-terminal stretch at methionine 1–glycine 29 is a signal peptide. 6 Cadherin domains span residues glutamine 30–phenylalanine 133, alanine 157–phenylalanine 242, aspartate 243–valine 349, alanine 350–phenylalanine 454, alanine 455–leucine 564, and valine 580–alanine 677. The Extracellular segment spans residues glutamine 30–asparagine 696. 2 N-linked (GlcNAc...) asparagine glycosylation sites follow: asparagine 265 and asparagine 304. Asparagine 547 carries N-linked (GlcNAc...) asparagine glycosylation. A helical membrane pass occupies residues valine 697 to tyrosine 717. The Cytoplasmic segment spans residues threonine 718–glutamine 949. 2 PXXP repeats span residues proline 733 to proline 736 and proline 773 to proline 776. Positions proline 733–proline 893 are 6 X 4 AA repeats of P-X-X-P. 2 disordered regions span residues arginine 753–tyrosine 807 and isoleucine 826–glutamine 949. Positions asparagine 780–glutamate 789 are enriched in basic and acidic residues. PXXP repeat units follow at residues proline 795–proline 798, proline 831–proline 834, proline 872–proline 875, and proline 890–proline 893. Residues aspartate 908–lysine 922 are compositionally biased toward basic and acidic residues.

Its subcellular location is the cell membrane. Functionally, potential calcium-dependent cell-adhesion protein. May be involved in the establishment and maintenance of specific neuronal connections in the brain. This is Protocadherin alpha-11 (PCDHA11) from Homo sapiens (Human).